Consider the following 275-residue polypeptide: DNA polymerase II subunit B4 (275 aa).

A DNA-binding region spans residues 11–17 (LPLAIVR). Low complexity predominate over residues 112-122 (ASYPAGGAALK). Residues 112–275 (ASYPAGGAAL…EEVESDEEDE (164 aa)) are disordered. The Nuclear localization signal motif lies at 135–142 (KKRKQEEP). Over residues 151–161 (SKIDEETKRND) the composition is skewed to basic and acidic residues. Residues 152–179 (KIDEETKRNDEETENDNTEEENGNDEED) are a coiled coil. Composition is skewed to acidic residues over residues 162 to 237 (EETE…EESG) and 266 to 275 (EEVESDEEDE).

The protein belongs to the NFYB/HAP3 subunit family. As to quaternary structure, heterotrimeric transcription factor composed of three components, NF-YA, NF-YB and NF-YC. NF-YB and NF-YC must interact and dimerize for NF-YA association and DNA binding. Binds directly with DPB3-1.

Its subcellular location is the nucleus. Its function is as follows. Component of the NF-Y/HAP transcription factor complex. The NF-Y complex stimulates the transcription of various genes by recognizing and binding to a CCAAT motif in promoters. The chain is DNA polymerase II subunit B4 from Arabidopsis thaliana (Mouse-ear cress).